Reading from the N-terminus, the 403-residue chain is MATTISNLPRELIEEILSRVPLRAMKAMRLTCKSWNNLSKSESFMKMHIGKAATREEKTMMVAVMPHTLALVSVVVDGVNPSTELKGQFSFLDKEFFIYRVIHYEGLLLCILKDATRIVVWNPYLGQERWIQIRYSHRPHGVDHFKYAVGYADKVSCRSVKLLRFLDYFHKASDKPFFWYEIYDFDSCLWTTLDITPHWGISWTYPRVSLKGNTYWPAREMNTKGFQDHIICFDFTSERFGPLLPLPRAQGCHVSLSCVKEEKLAVLLKHRLHHDSYEYEFEIWITTKIDVEMVSWSKFLRMDMRPKIKLPLSFYVDEEKKVFMGFDHGEYPKLFLNIIGETGFLRKLDLGVHEGHRSPCSYVPSLVQIKHPAGDKMIKQSSLEDRRFAQNSLRLAAIEKLIN.

Residues 2–47 (ATTISNLPRELIEEILSRVPLRAMKAMRLTCKSWNNLSKSESFMKM) form the F-box domain.

The protein is Putative F-box protein At5g41500 of Arabidopsis thaliana (Mouse-ear cress).